Here is a 348-residue protein sequence, read N- to C-terminus: Histidinol-phosphate aminotransferase (348 aa).

A disordered region spans residues 1–31; that stretch reads MLPTRDCVRQTPAYTPGEQPQTAGFTKLNTN. Positions 18–31 are enriched in polar residues; it reads EQPQTAGFTKLNTN. Lys207 carries the post-translational modification N6-(pyridoxal phosphate)lysine.

It belongs to the class-II pyridoxal-phosphate-dependent aminotransferase family. Histidinol-phosphate aminotransferase subfamily. As to quaternary structure, homodimer. Pyridoxal 5'-phosphate is required as a cofactor.

The enzyme catalyses L-histidinol phosphate + 2-oxoglutarate = 3-(imidazol-4-yl)-2-oxopropyl phosphate + L-glutamate. It participates in amino-acid biosynthesis; L-histidine biosynthesis; L-histidine from 5-phospho-alpha-D-ribose 1-diphosphate: step 7/9. The sequence is that of Histidinol-phosphate aminotransferase from Microcystis aeruginosa (strain NIES-843 / IAM M-2473).